The chain runs to 167 residues: Small ribosomal subunit protein uS5 (167 aa).

The S5 DRBM domain maps to 12 to 75 (LQEKLIAVNR…EKARRNMVTV (64 aa)).

Belongs to the universal ribosomal protein uS5 family. Part of the 30S ribosomal subunit. Contacts proteins S4 and S8.

Its function is as follows. With S4 and S12 plays an important role in translational accuracy. Located at the back of the 30S subunit body where it stabilizes the conformation of the head with respect to the body. This is Small ribosomal subunit protein uS5 from Shewanella sp. (strain W3-18-1).